Reading from the N-terminus, the 49-residue chain is Osteocalcin (49 aa).

The region spanning Y1–G47 is the Gla domain. P9 carries the post-translational modification Hydroxyproline. Residues E17, E21, E24, and D30 each coordinate Ca(2+). 4-carboxyglutamate occurs at positions 17, 21, and 24. Cysteines 23 and 29 form a disulfide.

It belongs to the osteocalcin/matrix Gla protein family. In terms of processing, gamma-carboxyglutamate residues are formed by vitamin K dependent carboxylation by GGCX. These residues are essential for the binding of calcium. Decarboxylation promotes the hormone activity.

It is found in the secreted. Its function is as follows. The carboxylated form is one of the main organic components of the bone matrix, which constitutes 1-2% of the total bone protein. It acts as a negative regulator of bone formation and is required to limit bone formation without impairing bone resorption or mineralization. The carboxylated form binds strongly to apatite and calcium. Functionally, the uncarboxylated form acts as a hormone secreted by osteoblasts, which regulates different cellular processes, such as energy metabolism, male fertility and brain development. Regulates of energy metabolism by acting as a hormone favoring pancreatic beta-cell proliferation, insulin secretion and sensitivity and energy expenditure. Uncarboxylated osteocalcin hormone also promotes testosterone production in the testes: acts as a ligand for G protein-coupled receptor GPRC6A at the surface of Leydig cells, initiating a signaling response that promotes the expression of enzymes required for testosterone synthesis in a CREB-dependent manner. Also acts as a regulator of brain development: osteocalcin hormone crosses the blood-brain barrier and acts as a ligand for GPR158 on neurons, initiating a signaling response that prevents neuronal apoptosis in the hippocampus, favors the synthesis of all monoamine neurotransmitters and inhibits that of gamma-aminobutyric acid (GABA). Osteocalcin also crosses the placenta during pregnancy and maternal osteocalcin is required for fetal brain development. This Equus caballus (Horse) protein is Osteocalcin (BGLAP).